The chain runs to 30 residues: GLPTCGETCFGGTCNTPGCSCSSWPICTRD.

The cyclopeptide (Gly-Asp) cross-link spans 1–30 (GLPTCGETCFGGTCNTPGCSCSSWPICTRD). Cystine bridges form between Cys-5-Cys-19, Cys-9-Cys-21, and Cys-14-Cys-27.

Belongs to the cyclotide family. Moebius subfamily. In terms of processing, this peptide occurs in both cyclic and linear forms. The linear form contains unmodified Trp-24, the cyclic peptide occurs in two forms with unmodified Trp-24, and with Trp-24 oxidized to form oxindolylalanine. Oxidation is enhanced by exposure to sunlight.

Probably participates in a plant defense mechanism. This is Kalata-B10 from Oldenlandia affinis.